Consider the following 476-residue polypeptide: Ribulose bisphosphate carboxylase large chain (476 aa).

Asparagine 124 and threonine 174 together coordinate substrate. Lysine 176 serves as the catalytic Proton acceptor. Residue lysine 178 participates in substrate binding. Residues lysine 202, aspartate 204, and glutamate 205 each coordinate Mg(2+). N6-carboxylysine is present on lysine 202. Histidine 295 functions as the Proton acceptor in the catalytic mechanism. Residues arginine 296, histidine 328, and serine 380 each coordinate substrate.

This sequence belongs to the RuBisCO large chain family. Type I subfamily. In terms of assembly, heterohexadecamer of 8 large chains and 8 small chains; disulfide-linked. The disulfide link is formed within the large subunit homodimers. Requires Mg(2+) as cofactor. In terms of processing, the disulfide bond which can form in the large chain dimeric partners within the hexadecamer appears to be associated with oxidative stress and protein turnover.

It is found in the carboxysome. It catalyses the reaction 2 (2R)-3-phosphoglycerate + 2 H(+) = D-ribulose 1,5-bisphosphate + CO2 + H2O. It carries out the reaction D-ribulose 1,5-bisphosphate + O2 = 2-phosphoglycolate + (2R)-3-phosphoglycerate + 2 H(+). RuBisCO catalyzes two reactions: the carboxylation of D-ribulose 1,5-bisphosphate, the primary event in carbon dioxide fixation, as well as the oxidative fragmentation of the pentose substrate in the photorespiration process. Both reactions occur simultaneously and in competition at the same active site. In Trichormus variabilis (strain ATCC 29413 / PCC 7937) (Anabaena variabilis), this protein is Ribulose bisphosphate carboxylase large chain.